Here is a 503-residue protein sequence, read N- to C-terminus: Cobyric acid synthase (503 aa).

The GATase cobBQ-type domain occupies 251–450; that stretch reads DLDIAVIRLP…IHGIFENAAF (200 aa). Residue Cys-331 is the Nucleophile of the active site. His-442 is an active-site residue.

Belongs to the CobB/CobQ family. CobQ subfamily.

Its pathway is cofactor biosynthesis; adenosylcobalamin biosynthesis. Catalyzes amidations at positions B, D, E, and G on adenosylcobyrinic A,C-diamide. NH(2) groups are provided by glutamine, and one molecule of ATP is hydrogenolyzed for each amidation. The polypeptide is Cobyric acid synthase (Dehalococcoides mccartyi (strain ATCC BAA-2100 / JCM 16839 / KCTC 5957 / BAV1)).